Consider the following 397-residue polypeptide: DNA-binding protein (397 aa).

Zn(2+) contacts are provided by cysteine 116 and histidine 118. Residues 129-161 (IEMAATSESGVAALKEGRGAVEINRWGRQVVKI) are flexible loop. Cysteine 169, cysteine 185, cysteine 225, cysteine 227, cysteine 276, and cysteine 289 together coordinate Zn(2+). The C-terminal arm, DBP binding stretch occupies residues 335-397 (ALLPEGSVNE…IVLESSEEDE (63 aa)). The disordered stretch occupies residues 338 to 397 (PEGSVNEDENPFGLDNSEDEEEVVPPSPPSPARKRTRTTVAEVHHKKKKKIVLESSEEDE). Residues 342–360 (VNEDENPFGLDNSEDEEEV) show a composition bias toward acidic residues.

It belongs to the adenoviridae E2A DNA-binding protein family. Homomultimerizes on viral ssDNA bound to pTP. Forms a initiation complex with viral polymerase, pTP and hosts NFIA and POU2F1/OCT1. Interacts with host SRCAP.

Its subcellular location is the host nucleus. Its function is as follows. Plays a role in the elongation phase of viral strand displacement replication by unwinding the template in an ATP-independent fashion, employing its capacity to form multimers. Also enhances the rate of initiation. Released from template upon second strand synthesis. Assembles in complex with viral pTP, viral pol, host NFIA and host POU2F1/OCT1 on viral origin of replication. Covers the whole ssDNA genome during synthesis. The complementary strand synthesis induces its relese from DNA template. May inhibit cellular transcription mediated by the interaction between host SRCAP and CBP. This chain is DNA-binding protein, found in Snake adenovirus serotype 1 (SnAdV-1).